The following is a 353-amino-acid chain: Phosphate acyltransferase (353 aa).

Belongs to the PlsX family. Homodimer. Probably interacts with PlsY.

It is found in the cytoplasm. The catalysed reaction is a fatty acyl-[ACP] + phosphate = an acyl phosphate + holo-[ACP]. It participates in lipid metabolism; phospholipid metabolism. In terms of biological role, catalyzes the reversible formation of acyl-phosphate (acyl-PO(4)) from acyl-[acyl-carrier-protein] (acyl-ACP). This enzyme utilizes acyl-ACP as fatty acyl donor, but not acyl-CoA. This is Phosphate acyltransferase from Bradyrhizobium sp. (strain BTAi1 / ATCC BAA-1182).